The chain runs to 86 residues: Small ribosomal subunit protein uS17 (86 aa).

This sequence belongs to the universal ribosomal protein uS17 family. As to quaternary structure, part of the 30S ribosomal subunit.

Functionally, one of the primary rRNA binding proteins, it binds specifically to the 5'-end of 16S ribosomal RNA. The chain is Small ribosomal subunit protein uS17 from Lactococcus lactis subsp. cremoris (strain SK11).